The primary structure comprises 130 residues: Small ribosomal subunit protein uS11 (130 aa).

The protein belongs to the universal ribosomal protein uS11 family. In terms of assembly, part of the 30S ribosomal subunit. Interacts with proteins S7 and S18. Binds to IF-3.

Functionally, located on the platform of the 30S subunit, it bridges several disparate RNA helices of the 16S rRNA. Forms part of the Shine-Dalgarno cleft in the 70S ribosome. This is Small ribosomal subunit protein uS11 from Shewanella baltica (strain OS223).